Consider the following 2153-residue polypeptide: RNA-directed RNA polymerase L (2153 aa).

His36, Glu54, Asp97, Glu110, and Val111 together coordinate Mn(2+). Lys124 functions as the For endonuclease activity in the catalytic mechanism. The 187-residue stretch at Thr957–Met1143 folds into the RdRp catalytic domain. Asp1100 contributes to the Mg(2+) binding site.

It belongs to the Bunyavirales RNA polymerase family. In terms of assembly, interacts with the viral nucleoprotein. Requires Mn(2+) as cofactor. Mg(2+) serves as cofactor.

Its subcellular location is the host cytoplasm. The protein resides in the host perinuclear region. The enzyme catalyses RNA(n) + a ribonucleoside 5'-triphosphate = RNA(n+1) + diphosphate. RNA-dependent RNA polymerase, which is responsible for the replication and transcription of the viral RNA genome using antigenomic RNA as an intermediate. During transcription, synthesizes subgenomic RNAs and assures their capping by a cap-snatching mechanism, which involves the endonuclease activity cleaving the host capped pre-mRNAs. These short capped RNAs are then used as primers for viral transcription. Cleaves ssRNA substrates but not DNA. Seems to downregulate the expression of its own and heterologous mRNAs through its endonuclease activity. This chain is RNA-directed RNA polymerase L, found in Black Creek Canal orthohantavirus (BCCV).